We begin with the raw amino-acid sequence, 129 residues long: D-ribose pyranase 2 (129 aa).

Catalysis depends on histidine 20, which acts as the Proton donor. Substrate is bound by residues aspartate 28, histidine 96, and 118 to 120 (YAN).

The protein belongs to the RbsD / FucU family. RbsD subfamily. As to quaternary structure, homodecamer.

The protein localises to the cytoplasm. It carries out the reaction beta-D-ribopyranose = beta-D-ribofuranose. It functions in the pathway carbohydrate metabolism; D-ribose degradation; D-ribose 5-phosphate from beta-D-ribopyranose: step 1/2. Functionally, catalyzes the interconversion of beta-pyran and beta-furan forms of D-ribose. In Streptomyces griseus subsp. griseus (strain JCM 4626 / CBS 651.72 / NBRC 13350 / KCC S-0626 / ISP 5235), this protein is D-ribose pyranase 2.